Consider the following 219-residue polypeptide: MVDLKTKAFDISQNFTISLDGPAASGKGTIGLILAKKFSLKYFQSSIVYRQLAFDCISQKIDVTDIDAVIALSKELKLDNNFDLENENIGNIASQIAVISEIRNNLNKYLINLVKTTPRMIMEGRDIGTVVAPDADLKIFITANPQIRAERRYKQLQAKGKTCILDEILRQIILRDKRDKERKAAPLLPASDALIIDTSKLSAMEVVEEVTNYIKNKIT.

ATP is bound at residue 21–29; that stretch reads GPAASGKGT.

It belongs to the cytidylate kinase family. Type 1 subfamily.

The protein localises to the cytoplasm. It catalyses the reaction CMP + ATP = CDP + ADP. It carries out the reaction dCMP + ATP = dCDP + ADP. The protein is Cytidylate kinase of Rickettsia africae (strain ESF-5).